Consider the following 434-residue polypeptide: ATP phosphoribosyltransferase regulatory subunit (434 aa).

A disordered region spans residues 1–48; that stretch reads MYGRGSGAEHSRGSGAEHFWDPRPEASSTVSSSLRPPSGARDLLPREV. The span at 27 to 38 shows a compositional bias: low complexity; sequence SSTVSSSLRPPS.

Belongs to the class-II aminoacyl-tRNA synthetase family. HisZ subfamily. As to quaternary structure, heteromultimer composed of HisG and HisZ subunits.

It localises to the cytoplasm. The protein operates within amino-acid biosynthesis; L-histidine biosynthesis; L-histidine from 5-phospho-alpha-D-ribose 1-diphosphate: step 1/9. In terms of biological role, required for the first step of histidine biosynthesis. May allow the feedback regulation of ATP phosphoribosyltransferase activity by histidine. The sequence is that of ATP phosphoribosyltransferase regulatory subunit from Synechococcus sp. (strain JA-2-3B'a(2-13)) (Cyanobacteria bacterium Yellowstone B-Prime).